The primary structure comprises 194 residues: ATP-dependent Clp protease proteolytic subunit (194 aa).

The Nucleophile role is filled by Ser98. His123 is a catalytic residue.

The protein belongs to the peptidase S14 family. Fourteen ClpP subunits assemble into 2 heptameric rings which stack back to back to give a disk-like structure with a central cavity, resembling the structure of eukaryotic proteasomes.

The protein localises to the cytoplasm. It catalyses the reaction Hydrolysis of proteins to small peptides in the presence of ATP and magnesium. alpha-casein is the usual test substrate. In the absence of ATP, only oligopeptides shorter than five residues are hydrolyzed (such as succinyl-Leu-Tyr-|-NHMec, and Leu-Tyr-Leu-|-Tyr-Trp, in which cleavage of the -Tyr-|-Leu- and -Tyr-|-Trp bonds also occurs).. In terms of biological role, cleaves peptides in various proteins in a process that requires ATP hydrolysis. Has a chymotrypsin-like activity. Plays a major role in the degradation of misfolded proteins. In Clostridium tetani (strain Massachusetts / E88), this protein is ATP-dependent Clp protease proteolytic subunit.